Reading from the N-terminus, the 409-residue chain is MTQQTQQPEVNIGLVGHVDHGKTTLVQALSGSWTDQHSEEMKRGISIRLGYADATFRMISNINPPEGYTVDETGPDGEPTETLRTVSFVDAPGHETLMATMLSGAAIMDGAVLVVSATEDVPQAQTEEHLMALDIIGIENVVIAQNKIDLVDRERAIESHNQIQSFVEGTVAEDAPIVPVSAQQAVNIDLLIDAIEREIPTPERDADTSPRLYAARSFDINRPGTTWKNLSGGVIGGSVSRGRLETGAEIELRPGREVDQGGQVEWQPIITDVRSLQAGGESVSEVTPGGLCGVGTGLDPSLTKGDSLAGQIVGEPGTLPPTRESFTMTVELLDRVVGDEAGEVETISTGEPLMLTVGTATTVGAVTSARSGEAEVSLKRPVCAEEGSKIAINRRVGARWRLIGIGTLE.

The tr-type G domain occupies 7 to 203 (QPEVNIGLVG…AIEREIPTPE (197 aa)). Residues 16–23 (GHVDHGKT) form a G1 region. 4 residues coordinate Mg(2+): Asp19, Thr23, Gly44, and Ser46. 19-24 (DHGKTT) lines the GTP pocket. The interval 44 to 48 (GISIR) is G2. The tract at residues 90-93 (DAPG) is G3. GTP-binding positions include 146–149 (NKID) and 181–183 (SAQ). The tract at residues 146-149 (NKID) is G4. The tract at residues 181-183 (SAQ) is G5.

This sequence belongs to the TRAFAC class translation factor GTPase superfamily. Classic translation factor GTPase family. EIF2G subfamily. As to quaternary structure, heterotrimer composed of an alpha, a beta and a gamma chain. Mg(2+) is required as a cofactor.

It catalyses the reaction GTP + H2O = GDP + phosphate + H(+). Functionally, eIF-2 functions in the early steps of protein synthesis by forming a ternary complex with GTP and initiator tRNA. This is Translation initiation factor 2 subunit gamma from Haloquadratum walsbyi (strain DSM 16790 / HBSQ001).